A 248-amino-acid chain; its full sequence is UPF0736 protein BCB4264_A1231 (248 aa).

This sequence belongs to the UPF0736 family.

This chain is UPF0736 protein BCB4264_A1231, found in Bacillus cereus (strain B4264).